Here is a 255-residue protein sequence, read N- to C-terminus: MQQEEIIEGYYGASKGLKKSGIYAKLDFLQSATGLILALFMIAHMFLVSSILISDEAMYKVAKFFEGSLFLKAGEPAIVSVVAAGIILILVAHAFLALRKFPINYRQYKVFKTHKHLMKHGDTSLWFIQALTGFAMFFLASIHLFVMLTEPESIGPHGSSYRFVTQNFWLLYIFLLFAVELHGSIGLYRLAIKWGWFKNVSIQGLRKVKWAMSVFFIVLGLCTYGAYIKKGLENKENGIKTMQEAIEADGKFHKE.

The next 5 membrane-spanning stretches (helical) occupy residues 33 to 53 (TGLILALFMIAHMFLVSSILI), 78 to 98 (IVSVVAAGIILILVAHAFLAL), 126 to 146 (WFIQALTGFAMFFLASIHLFV), 168 to 188 (FWLLYIFLLFAVELHGSIGLY), and 208 to 228 (VKWAMSVFFIVLGLCTYGAYI). Residues H44, H93, H143, and H182 each coordinate heme b.

Belongs to the diheme cytochrome b FrdC family. Part of an enzyme complex containing three subunits: a flavoprotein (frdA), an iron-sulfur protein (frdB), and diheme cytochrome b (frdC). Heme b serves as cofactor.

The protein localises to the cell inner membrane. In terms of biological role, the fumarate reductase enzyme complex is required for fumarate respiration. This subunit anchors the complex in the membrane and binds a diheme cytochrome b. The protein is Fumarate reductase cytochrome b subunit (frdC) of Helicobacter pylori (strain ATCC 700392 / 26695) (Campylobacter pylori).